Consider the following 610-residue polypeptide: UvrABC system protein C (610 aa).

The region spanning serine 16 to valine 94 is the GIY-YIG domain. The region spanning glutamine 204–valine 239 is the UVR domain.

It belongs to the UvrC family. In terms of assembly, interacts with UvrB in an incision complex.

The protein resides in the cytoplasm. Functionally, the UvrABC repair system catalyzes the recognition and processing of DNA lesions. UvrC both incises the 5' and 3' sides of the lesion. The N-terminal half is responsible for the 3' incision and the C-terminal half is responsible for the 5' incision. The polypeptide is UvrABC system protein C (Serratia proteamaculans (strain 568)).